A 128-amino-acid chain; its full sequence is Small ribosomal subunit protein eS8 (128 aa).

Residues 1–41 (MSYYQGNDSRKITGGQKGKNRDKRKYELGSPPTETKISDKD) are disordered.

This sequence belongs to the eukaryotic ribosomal protein eS8 family. As to quaternary structure, part of the 30S ribosomal subunit.

The sequence is that of Small ribosomal subunit protein eS8 from Sulfolobus acidocaldarius (strain ATCC 33909 / DSM 639 / JCM 8929 / NBRC 15157 / NCIMB 11770).